The primary structure comprises 426 residues: Cytochrome c biogenesis protein CcsB (426 aa).

The next 3 membrane-spanning stretches (helical) occupy residues 11–31 (LRVA…GTAI), 69–89 (SVWF…CSWR), and 159–179 (VGPL…VWGV).

Belongs to the Ccs1/CcsB family. In terms of assembly, may interact with CcsA.

Its subcellular location is the cellular thylakoid membrane. In terms of biological role, required during biogenesis of c-type cytochromes (cytochrome c6 and cytochrome f) at the step of heme attachment. This chain is Cytochrome c biogenesis protein CcsB, found in Synechococcus sp. (strain CC9902).